Consider the following 49-residue polypeptide: Disintegrin eristostatin (49 aa).

The region spanning glutamine 1–glycine 49 is the Disintegrin domain. 4 cysteine pairs are disulfide-bonded: cysteine 5–cysteine 14, cysteine 10–cysteine 35, cysteine 11–cysteine 40, and cysteine 23–cysteine 42. The Cell attachment site signature appears at arginine 27 to aspartate 29.

This sequence belongs to the venom metalloproteinase (M12B) family. P-II subfamily. P-IIa sub-subfamily. As to quaternary structure, monomer. As to expression, expressed by the venom gland.

Its subcellular location is the secreted. In terms of biological role, is a potent inhibitor of ADP-induced platelet aggregation. Acts by binding to alpha-IIb/beta-3 (ITGA2B/ITGB3) receptor on the platelet surface. Binds with the same high affinity to resting and activated platelets. Also binds the alpha-4/beta-1 (ITGA4/ITGB1) integrin. Is a potent inhibitor of human and murine melanoma metastases in mouse model systems, also due to the inhibition of binding between the alpha-4/beta-1 integrin and the vascular cell adhesion protein VCAM1. Reacts neither with the integrin alpha-V/beta-3 (ITGAV/ITGB3) vitronectin receptor nor with the integrin alpha-5/beta-1 (ITGA5/ITGB1) fibronectin receptor. Has no effect on cell proliferation or angiogenesis. Specifically inhibits cell migration on fibronectin, but not that on collagen IV or laminin. May involve fibronectin-binding integrins that mediate cell migration. The chain is Disintegrin eristostatin from Eristicophis macmahoni (Leaf-nosed viper).